Here is a 339-residue protein sequence, read N- to C-terminus: MRVYYDRDADLNLIKGKKVVIVGYGSQGHAHALNLKDSGVKDVAIALRKGSATAKKAEAAGFKVMEVAEAAKWADVMMMLTPDELQGEIYRDHLHDNMKQGAALLFAHGLNVHFNLIEPRADLDVLMVAPKGPGHTVRSEYQRGGGVPSLIAIHQDPSGNAHDLGLSYASAIGGGRAGIIETSFKEECETDLFGEQVVLCGGLVELIKAGFETLVEAGYAPEMAYFECLHEVKLIVDLIYEGGIANMNYSISNTAEYGEYVTGPRIVTAETKAEMKRVLADIQNGIFTRNWMLENKVNQTSFKATRAKLAAHPIEEVGAKLRDMMPWIKKGALVDKSKN.

Residues Met-1–Thr-182 form the KARI N-terminal Rossmann domain. NADP(+) contacts are provided by residues Tyr-24 to Gln-27, Arg-48, Ser-51, Thr-53, and Asp-83 to Gln-86. His-108 is an active-site residue. Gly-134 contacts NADP(+). The region spanning Ser-183 to Ile-328 is the KARI C-terminal knotted domain. The Mg(2+) site is built by Asp-191, Glu-195, Glu-227, and Glu-231. Residue Ser-252 participates in substrate binding.

This sequence belongs to the ketol-acid reductoisomerase family. Mg(2+) is required as a cofactor.

The enzyme catalyses (2R)-2,3-dihydroxy-3-methylbutanoate + NADP(+) = (2S)-2-acetolactate + NADPH + H(+). It catalyses the reaction (2R,3R)-2,3-dihydroxy-3-methylpentanoate + NADP(+) = (S)-2-ethyl-2-hydroxy-3-oxobutanoate + NADPH + H(+). It functions in the pathway amino-acid biosynthesis; L-isoleucine biosynthesis; L-isoleucine from 2-oxobutanoate: step 2/4. Its pathway is amino-acid biosynthesis; L-valine biosynthesis; L-valine from pyruvate: step 2/4. Involved in the biosynthesis of branched-chain amino acids (BCAA). Catalyzes an alkyl-migration followed by a ketol-acid reduction of (S)-2-acetolactate (S2AL) to yield (R)-2,3-dihydroxy-isovalerate. In the isomerase reaction, S2AL is rearranged via a Mg-dependent methyl migration to produce 3-hydroxy-3-methyl-2-ketobutyrate (HMKB). In the reductase reaction, this 2-ketoacid undergoes a metal-dependent reduction by NADPH to yield (R)-2,3-dihydroxy-isovalerate. In Rhodopseudomonas palustris (strain HaA2), this protein is Ketol-acid reductoisomerase (NADP(+)).